Here is a 483-residue protein sequence, read N- to C-terminus: MQIDSDLQNNLDTLKKTLGQNDDMMFYTFAFGDSRQKACLLYIDGLTENKMLAQYVISPLQKEALAHKECSIEDLSAFFFGFHHSVVSTMKEIEQLVFSGQAILLADGYRGGLAFDTKSVATRSLDEPSSEVVERGPKIGFIEKLRTNTALLRERTSDPNLVIKEMTLGKRTKKKIAVAYIQDIAPDYVVKEVFKRLKSVNIDNLPESGTLEQLIEDEPFSIFPTILSTERPDRVESSLLEGRVSILVDGTPFALIVPATVDEFIHSPDDYSQRWIPMSLVRLLRYSSILITIYLPGLYISLVSFHTGLLPTRMAISIAGSRLNVPFPPFVEAFIMIFTIELIREAGLRLPKPIGQTIGLIGGVVIGQAAVQAQIVSALMVIVVSVTALASFTVPSYAYNFPLRIIRIGVMISATALGMYGVIMVYLFVIGHLMRLKSFGQDYIIPIMAQPGQDLKDTVIRIPTMFLKRRPTRNDPEDNIRQR.

Transmembrane regions (helical) follow at residues 289 to 309 (ILITIYLPGLYISLVSFHTGL), 323 to 343 (LNVPFPPFVEAFIMIFTIELI), 353 to 373 (PIGQTIGLIGGVVIGQAAVQA), 375 to 395 (IVSALMVIVVSVTALASFTVP), and 410 to 430 (VMISATALGMYGVIMVYLFVI).

This sequence belongs to the GerABKA family.

It is found in the cell membrane. Involved in the response to the germinative mixture of L-asparagine, glucose, fructose and potassium ions (AGFK). Cannot stimulate germination in the absence of gerD and gerK gene products (fructose and glucose receptors respectively). The polypeptide is Spore germination protein B1 (gerBA) (Bacillus subtilis (strain 168)).